The following is a 448-amino-acid chain: Signal recognition particle 54 kDa protein (448 aa).

GTP contacts are provided by residues 107–114 (GIQGSGKT), 189–193 (DSAGR), and 247–250 (TKLD).

Belongs to the GTP-binding SRP family. SRP54 subfamily. Part of the signal recognition particle protein translocation system, which is composed of SRP and FtsY. Archaeal SRP consists of a 7S RNA molecule of 300 nucleotides and two protein subunits: SRP54 and SRP19.

It localises to the cytoplasm. It carries out the reaction GTP + H2O = GDP + phosphate + H(+). Its function is as follows. Involved in targeting and insertion of nascent membrane proteins into the cytoplasmic membrane. Binds to the hydrophobic signal sequence of the ribosome-nascent chain (RNC) as it emerges from the ribosomes. The SRP-RNC complex is then targeted to the cytoplasmic membrane where it interacts with the SRP receptor FtsY. The sequence is that of Signal recognition particle 54 kDa protein from Thermococcus onnurineus (strain NA1).